Consider the following 198-residue polypeptide: FMN-dependent NADH:quinone oxidoreductase (198 aa).

96-99 (MYNF) lines the FMN pocket.

It belongs to the azoreductase type 1 family. As to quaternary structure, homodimer. The cofactor is FMN.

It carries out the reaction 2 a quinone + NADH + H(+) = 2 a 1,4-benzosemiquinone + NAD(+). The enzyme catalyses N,N-dimethyl-1,4-phenylenediamine + anthranilate + 2 NAD(+) = 2-(4-dimethylaminophenyl)diazenylbenzoate + 2 NADH + 2 H(+). Quinone reductase that provides resistance to thiol-specific stress caused by electrophilic quinones. Functionally, also exhibits azoreductase activity. Catalyzes the reductive cleavage of the azo bond in aromatic azo compounds to the corresponding amines. The chain is FMN-dependent NADH:quinone oxidoreductase from Burkholderia mallei (strain ATCC 23344).